The primary structure comprises 189 residues: MDTEYEQVNKPWSELYKETTLGNKLMVNVGMEDQEVPLLGSNFLTKVRVGLSGGYITMRRIRIKIIPLVSRKAGVSGKLYLRDISDTTGRKLHCTESLDLGREIRLTMQHLDFSVSTRSDVPIVFGFEELVSPFLEGRELFSIYVRWQFGLSKNCYSLPQSKWKVMYQEDALKVLKPSKKKASRTDSSV.

This sequence belongs to the tombusvirus/aureusvirus movement protein p22 family.

It is found in the host membrane. Functionally, transports viral genome to neighboring plant cells directly through plasmosdesmata, without any budding. The movement protein allows efficient cell to cell propagation, by bypassing the host cell wall barrier. The chain is Movement protein from Artichoke mottled crinkle virus (AMCV).